The primary structure comprises 436 residues: UPF0597 protein YhaM (436 aa).

It belongs to the UPF0597 family.

This is UPF0597 protein YhaM from Shigella boydii serotype 4 (strain Sb227).